The sequence spans 941 residues: Isoleucine--tRNA ligase (941 aa).

The short motif at 69–79 (PYANGDIHIGH) is the 'HIGH' region element. Residue Glu589 coordinates L-isoleucyl-5'-AMP. The 'KMSKS' region motif lies at 630–634 (KMSKS). Residue Lys633 coordinates ATP. Zn(2+)-binding residues include Cys915, Cys918, Cys932, and Cys935.

It belongs to the class-I aminoacyl-tRNA synthetase family. IleS type 1 subfamily. Monomer. Requires Zn(2+) as cofactor.

Its subcellular location is the cytoplasm. The enzyme catalyses tRNA(Ile) + L-isoleucine + ATP = L-isoleucyl-tRNA(Ile) + AMP + diphosphate. Its function is as follows. Catalyzes the attachment of isoleucine to tRNA(Ile). As IleRS can inadvertently accommodate and process structurally similar amino acids such as valine, to avoid such errors it has two additional distinct tRNA(Ile)-dependent editing activities. One activity is designated as 'pretransfer' editing and involves the hydrolysis of activated Val-AMP. The other activity is designated 'posttransfer' editing and involves deacylation of mischarged Val-tRNA(Ile). This chain is Isoleucine--tRNA ligase, found in Zymomonas mobilis subsp. mobilis (strain ATCC 31821 / ZM4 / CP4).